The following is a 448-amino-acid chain: Glucose-6-phosphate isomerase (448 aa).

E290 acts as the Proton donor in catalysis. Residues H311 and K425 contribute to the active site.

It belongs to the GPI family.

The protein localises to the cytoplasm. It carries out the reaction alpha-D-glucose 6-phosphate = beta-D-fructose 6-phosphate. The protein operates within carbohydrate biosynthesis; gluconeogenesis. Its pathway is carbohydrate degradation; glycolysis; D-glyceraldehyde 3-phosphate and glycerone phosphate from D-glucose: step 2/4. Its function is as follows. Catalyzes the reversible isomerization of glucose-6-phosphate to fructose-6-phosphate. This Acetivibrio thermocellus (strain ATCC 27405 / DSM 1237 / JCM 9322 / NBRC 103400 / NCIMB 10682 / NRRL B-4536 / VPI 7372) (Clostridium thermocellum) protein is Glucose-6-phosphate isomerase.